The chain runs to 291 residues: Pyridoxal 5'-phosphate synthase subunit PdxS (291 aa).

Asp-23 lines the D-ribose 5-phosphate pocket. The active-site Schiff-base intermediate with D-ribose 5-phosphate is Lys-80. Position 152 (Gly-152) interacts with D-ribose 5-phosphate. D-glyceraldehyde 3-phosphate is bound at residue Arg-164. D-ribose 5-phosphate is bound by residues Gly-213 and 234 to 235; that span reads GS.

The protein belongs to the PdxS/SNZ family. In the presence of PdxT, forms a dodecamer of heterodimers.

The enzyme catalyses aldehydo-D-ribose 5-phosphate + D-glyceraldehyde 3-phosphate + L-glutamine = pyridoxal 5'-phosphate + L-glutamate + phosphate + 3 H2O + H(+). It functions in the pathway cofactor biosynthesis; pyridoxal 5'-phosphate biosynthesis. Catalyzes the formation of pyridoxal 5'-phosphate from ribose 5-phosphate (RBP), glyceraldehyde 3-phosphate (G3P) and ammonia. The ammonia is provided by the PdxT subunit. Can also use ribulose 5-phosphate and dihydroxyacetone phosphate as substrates, resulting from enzyme-catalyzed isomerization of RBP and G3P, respectively. The chain is Pyridoxal 5'-phosphate synthase subunit PdxS from Bifidobacterium adolescentis (strain ATCC 15703 / DSM 20083 / NCTC 11814 / E194a).